The chain runs to 146 residues: Large ribosomal subunit protein uL16 (146 aa).

Belongs to the universal ribosomal protein uL16 family. Part of the 50S ribosomal subunit.

In terms of biological role, binds 23S rRNA and is also seen to make contacts with the A and possibly P site tRNAs. In Caulobacter sp. (strain K31), this protein is Large ribosomal subunit protein uL16.